The primary structure comprises 157 residues: SsrA-binding protein (157 aa).

Positions Asp-135 to Arg-151 are enriched in basic and acidic residues. The interval Asp-135–Gly-157 is disordered.

Belongs to the SmpB family.

Its subcellular location is the cytoplasm. Required for rescue of stalled ribosomes mediated by trans-translation. Binds to transfer-messenger RNA (tmRNA), required for stable association of tmRNA with ribosomes. tmRNA and SmpB together mimic tRNA shape, replacing the anticodon stem-loop with SmpB. tmRNA is encoded by the ssrA gene; the 2 termini fold to resemble tRNA(Ala) and it encodes a 'tag peptide', a short internal open reading frame. During trans-translation Ala-aminoacylated tmRNA acts like a tRNA, entering the A-site of stalled ribosomes, displacing the stalled mRNA. The ribosome then switches to translate the ORF on the tmRNA; the nascent peptide is terminated with the 'tag peptide' encoded by the tmRNA and targeted for degradation. The ribosome is freed to recommence translation, which seems to be the essential function of trans-translation. The protein is SsrA-binding protein of Rhodopseudomonas palustris (strain BisB5).